Here is a 150-residue protein sequence, read N- to C-terminus: Macrodomain Ter protein (150 aa).

Belongs to the MatP family. As to quaternary structure, homodimer.

It localises to the cytoplasm. Its function is as follows. Required for spatial organization of the terminus region of the chromosome (Ter macrodomain) during the cell cycle. Prevents early segregation of duplicated Ter macrodomains during cell division. Binds specifically to matS, which is a 13 bp signature motif repeated within the Ter macrodomain. This is Macrodomain Ter protein from Shigella dysenteriae serotype 1 (strain Sd197).